Consider the following 462-residue polypeptide: Argininosuccinate lyase (462 aa).

Belongs to the lyase 1 family. Argininosuccinate lyase subfamily.

Its subcellular location is the cytoplasm. The catalysed reaction is 2-(N(omega)-L-arginino)succinate = fumarate + L-arginine. The protein operates within amino-acid biosynthesis; L-arginine biosynthesis; L-arginine from L-ornithine and carbamoyl phosphate: step 3/3. In Nitratiruptor sp. (strain SB155-2), this protein is Argininosuccinate lyase.